The primary structure comprises 121 residues: Protein SNORC (121 aa).

A signal peptide spans 1–24 (MASCLALRVALLLISGVLAPAVLT). Over 25–92 (AEGPQEPDPT…QDGGSLGPGA (68 aa)) the chain is Extracellular. The segment at 26–84 (EGPQEPDPTLWNEPIELPSGEGPLESTSHNQEFAVSGPPFPTSAPAPEDSTPPARVDQD) is disordered. Residues 93 to 113 (IAAIVIAALLATCVVLALVVV) traverse the membrane as a helical segment. At 114–121 (ALRKFSAS) the chain is on the cytoplasmic side.

As to quaternary structure, interacts (via the extracellular domain) with FGF2. In terms of tissue distribution, expressed only in cartilage, including nasal, knee epiphyseal and rib tissues. In proliferation and hypertrophic chondrocytes, detected intracellulary and in the pericellular extracellular matrix. In primary spongiosa, detected only in the extracellular matrix.

It localises to the membrane. Its subcellular location is the cytoplasm. It is found in the secreted. The protein localises to the extracellular space. The protein resides in the extracellular matrix. In terms of biological role, plays a role in the regulation of chondrocyte maturation and postnatal endochondral ossification. May inhibit cell growth stimulation induced by FGF2. The polypeptide is Protein SNORC (Mus musculus (Mouse)).